A 475-amino-acid chain; its full sequence is Kynureninase (475 aa).

Residues Leu-142, Thr-143, 170–173, Asp-255, His-258, and Tyr-280 each bind pyridoxal 5'-phosphate; that span reads FPSD. Lys-281 is modified (N6-(pyridoxal phosphate)lysine). Pyridoxal 5'-phosphate is bound by residues Trp-320 and Asn-348.

Belongs to the kynureninase family. In terms of assembly, homodimer. Pyridoxal 5'-phosphate serves as cofactor.

Its subcellular location is the cytoplasm. The catalysed reaction is L-kynurenine + H2O = anthranilate + L-alanine + H(+). It catalyses the reaction 3-hydroxy-L-kynurenine + H2O = 3-hydroxyanthranilate + L-alanine + H(+). It functions in the pathway amino-acid degradation; L-kynurenine degradation; L-alanine and anthranilate from L-kynurenine: step 1/1. Its pathway is cofactor biosynthesis; NAD(+) biosynthesis; quinolinate from L-kynurenine: step 2/3. Its function is as follows. Catalyzes the cleavage of L-kynurenine (L-Kyn) and L-3-hydroxykynurenine (L-3OHKyn) into anthranilic acid (AA) and 3-hydroxyanthranilic acid (3-OHAA), respectively. The polypeptide is Kynureninase (bna5) (Botryotinia fuckeliana (strain B05.10) (Noble rot fungus)).